A 456-amino-acid chain; its full sequence is Crinkler effector protein 2 (456 aa).

The signal sequence occupies residues 1–17; that stretch reads MVKLVCAIVGVAGSAFP. Residues 18 to 54 form an LQLFLAK domain region; the sequence is VDTDASQLVGDLKKAIKAENAMTFTGDAKDLQLFLAK. Residues 55–136 are DWL domain; sequence QPVDDESGKE…NMELPSSEQI (82 aa). Residues 137–143 carry the HVLVXXP motif motif; sequence HVLVVVP. An N-linked (GlcNAc...) asparagine glycan is attached at asparagine 338.

The protein belongs to the Crinkler effector family.

The protein resides in the secreted. Its subcellular location is the host nucleus. In terms of biological role, secreted effector that effector that induces cell death when expressed in host plants. Induces the expression of defense response genes in tomato. This Phytophthora infestans (Potato late blight agent) protein is Crinkler effector protein 2.